The primary structure comprises 691 residues: Solute carrier family 28 member 3 (691 aa).

The segment at 1–78 is disordered; it reads MELRSTAAPR…HMEDDDEEMQ (78 aa). The Cytoplasmic portion of the chain corresponds to 1–102; sequence MELRSTAAPR…FCRKHKTTLR (102 aa). Low complexity predominate over residues 21-30; that stretch reads NEENFLENEN. Polar residues predominate over residues 31-42; the sequence is TSGNNSIRSRAV. The span at 43-54 shows a compositional bias: basic and acidic residues; the sequence is QSREHTNTKQDE. A helical membrane pass occupies residues 103-123; sequence HIIWGILLAGYLVMVISACVL. The Extracellular segment spans residues 124 to 128; that stretch reads NFHRA. A helical membrane pass occupies residues 129–149; sequence LPLFVITVAAIFFVVWDHLMA. The Cytoplasmic portion of the chain corresponds to 150–173; it reads KYEHRIDEMLSPGRRLLNSHWFWL. Residues 174–194 form a helical membrane-spanning segment; sequence KWVIWSSLVLAVIFWLAFDTA. At 195-197 the chain is on the extracellular side; that stretch reads KLG. A helical transmembrane segment spans residues 198–219; it reads QQQLVSFGGLIMYIVLLFLFSK. Over 220–227 the chain is Cytoplasmic; the sequence is YPTRVYWR. The helical transmembrane segment at 228-247 threads the bilayer; the sequence is PVLWGIGLQFLLGLLILRTD. At 248-284 the chain is on the extracellular side; sequence PGFIAFDWLGRQVQTFLEYTDAGASFVFGEKYKDHFF. Residues 285-305 form a helical membrane-spanning segment; it reads AFKVLPIVVFFSTVMSMLYYL. The Cytoplasmic portion of the chain corresponds to 306 to 329; that stretch reads GLMQWIIRKVGWIMLVTTGSSPIE. An intramembrane region (helical) is located at residues 330-348; it reads SVVASGNIFVGQTESPLLV. At 349–361 the chain is on the cytoplasmic side; that stretch reads RPYLPYITKSELH. A helical transmembrane segment spans residues 362 to 384; the sequence is AIMTAGFSTIAGSVLGAYISFGV. Residues 385–386 lie on the Extracellular side of the membrane; the sequence is PS. Residues 387 to 408 traverse the membrane as a helical segment; sequence SHLLTASVMSAPASLAAAKLFW. At 409–443 the chain is on the cytoplasmic side; that stretch reads PETEKPKITLKNAMKMESGDSGNLLEAATQGASSS. A helical transmembrane segment spans residues 444 to 469; that stretch reads ISLVANIAVNLIAFLALLSFMNSALS. Residues 470–507 are Extracellular-facing; sequence WFGNMFDYPQLSFELICSYIFMPFSFMMGVEWQDSFMV. An intramembrane region (helical) is located at residues 508 to 527; the sequence is ARLIGYKTFFNEFVAYEHLS. Topologically, residues 528–566 are extracellular; the sequence is KWIHLRKEGGPKFVNGVQQYISIRSEIIATYALCGFANI. The chain crosses the membrane as a helical span at residues 567–577; the sequence is GSLGIVIGGLT. Residues 578–590 are Cytoplasmic-facing; the sequence is SMAPSRKRDIASG. Residues 591–613 traverse the membrane as a helical segment; it reads AVRALIAGTVACFMTACIAGILS. Over 614–691 the chain is Extracellular; sequence STPVDINCHH…FNCNGISNTF (78 aa).

The protein belongs to the concentrative nucleoside transporter (CNT) (TC 2.A.41) family. In terms of assembly, homotrimer. Expressed in pancreas, bone marrow, trachea, mammary gland, liver, prostate, and regions of intestine, brain, lung, placenta, testis, kidney, and heart.

It is found in the cell membrane. It localises to the endoplasmic reticulum membrane. The enzyme catalyses thymidine(out) + 2 Na(+)(out) = thymidine(in) + 2 Na(+)(in). It catalyses the reaction cytidine(out) + 2 Na(+)(out) = cytidine(in) + 2 Na(+)(in). The catalysed reaction is uridine(out) + 2 Na(+)(out) = uridine(in) + 2 Na(+)(in). It carries out the reaction adenosine(out) + 2 Na(+)(out) = adenosine(in) + 2 Na(+)(in). The enzyme catalyses guanosine(out) + 2 Na(+)(out) = guanosine(in) + 2 Na(+)(in). It catalyses the reaction inosine(out) + 2 Na(+)(out) = inosine(in) + 2 Na(+)(in). Sodium-dependent, pyrimidine- and purine-selective. Involved in the homeostasis of endogenous nucleosides. Exhibits the transport characteristics of the nucleoside transport system cib or N3 subtype (N3/cib) (with marked transport of both thymidine and inosine). Employs a 2:1 sodium/nucleoside ratio. Transports uridine. Also able to transport gemcitabine, 3'-azido-3'-deoxythymidine (AZT), ribavirin and 3-deazauridine. The chain is Solute carrier family 28 member 3 (SLC28A3) from Homo sapiens (Human).